The chain runs to 176 residues: NAD(P)H-quinone oxidoreductase subunit 6, chloroplastic (176 aa).

Helical transmembrane passes span 10 to 30 (FLLVFLGSGLLFGSLGVVLFP), 32 to 52 (PIFSAFSLGFVLVCISLLYIL), 61 to 81 (AQLLIYVGAITVLIIFAVMFM), 95 to 115 (VGDGITSVICTTILFSLISTI), and 152 to 172 (FFLPFELISIILLVALIGAIS).

This sequence belongs to the complex I subunit 6 family. As to quaternary structure, NDH is composed of at least 16 different subunits, 5 of which are encoded in the nucleus.

The protein localises to the plastid. Its subcellular location is the chloroplast thylakoid membrane. It catalyses the reaction a plastoquinone + NADH + (n+1) H(+)(in) = a plastoquinol + NAD(+) + n H(+)(out). The enzyme catalyses a plastoquinone + NADPH + (n+1) H(+)(in) = a plastoquinol + NADP(+) + n H(+)(out). Functionally, NDH shuttles electrons from NAD(P)H:plastoquinone, via FMN and iron-sulfur (Fe-S) centers, to quinones in the photosynthetic chain and possibly in a chloroplast respiratory chain. The immediate electron acceptor for the enzyme in this species is believed to be plastoquinone. Couples the redox reaction to proton translocation, and thus conserves the redox energy in a proton gradient. This is NAD(P)H-quinone oxidoreductase subunit 6, chloroplastic (ndhG) from Aethionema cordifolium (Lebanon stonecress).